The following is a 120-amino-acid chain: Protein CcdB (120 aa).

The region spanning 3–118 (RVLVVDDAKF…KVLEAVSRVM (116 aa)) is the Response regulatory domain. Position 53 is a 4-aspartylphosphate (D53).

The protein is Protein CcdB (ccdB) of Bacillus subtilis (strain 168).